Here is a 274-residue protein sequence, read N- to C-terminus: 3-methyl-2-oxobutanoate hydroxymethyltransferase (274 aa).

Mg(2+) is bound by residues Asp49 and Asp88. 3-methyl-2-oxobutanoate-binding positions include 49–50, Asp88, and Lys118; that span reads DS. Glu120 provides a ligand contact to Mg(2+). The Proton acceptor role is filled by Glu187.

This sequence belongs to the PanB family. Homodecamer; pentamer of dimers. It depends on Mg(2+) as a cofactor.

The protein resides in the cytoplasm. It carries out the reaction 3-methyl-2-oxobutanoate + (6R)-5,10-methylene-5,6,7,8-tetrahydrofolate + H2O = 2-dehydropantoate + (6S)-5,6,7,8-tetrahydrofolate. The protein operates within cofactor biosynthesis; (R)-pantothenate biosynthesis; (R)-pantoate from 3-methyl-2-oxobutanoate: step 1/2. Functionally, catalyzes the reversible reaction in which hydroxymethyl group from 5,10-methylenetetrahydrofolate is transferred onto alpha-ketoisovalerate to form ketopantoate. This chain is 3-methyl-2-oxobutanoate hydroxymethyltransferase, found in Nitrobacter winogradskyi (strain ATCC 25391 / DSM 10237 / CIP 104748 / NCIMB 11846 / Nb-255).